Reading from the N-terminus, the 297-residue chain is tRNA pseudouridine synthase B (297 aa).

The active-site Nucleophile is Asp-44.

The protein belongs to the pseudouridine synthase TruB family. Type 1 subfamily.

The enzyme catalyses uridine(55) in tRNA = pseudouridine(55) in tRNA. In terms of biological role, responsible for synthesis of pseudouridine from uracil-55 in the psi GC loop of transfer RNAs. The sequence is that of tRNA pseudouridine synthase B from Corynebacterium glutamicum (strain R).